The following is a 105-amino-acid chain: Integration host factor subunit alpha (105 aa).

It belongs to the bacterial histone-like protein family. In terms of assembly, heterodimer of an alpha and a beta chain.

In terms of biological role, this protein is one of the two subunits of integration host factor, a specific DNA-binding protein that functions in genetic recombination as well as in transcriptional and translational control. The sequence is that of Integration host factor subunit alpha from Azorhizobium caulinodans (strain ATCC 43989 / DSM 5975 / JCM 20966 / LMG 6465 / NBRC 14845 / NCIMB 13405 / ORS 571).